Here is a 160-residue protein sequence, read N- to C-terminus: Phosphopantetheine adenylyltransferase (160 aa).

S9 is a binding site for substrate. ATP contacts are provided by residues 9–10 and H17; that span reads SF. Residues K41, L73, and K87 each contribute to the substrate site. ATP-binding positions include 88-90, E98, and 123-129; these read GLR and YSYLSSS.

The protein belongs to the bacterial CoaD family. As to quaternary structure, homohexamer. Requires Mg(2+) as cofactor.

It localises to the cytoplasm. The enzyme catalyses (R)-4'-phosphopantetheine + ATP + H(+) = 3'-dephospho-CoA + diphosphate. It functions in the pathway cofactor biosynthesis; coenzyme A biosynthesis; CoA from (R)-pantothenate: step 4/5. Its function is as follows. Reversibly transfers an adenylyl group from ATP to 4'-phosphopantetheine, yielding dephospho-CoA (dPCoA) and pyrophosphate. The polypeptide is Phosphopantetheine adenylyltransferase (Clostridium tetani (strain Massachusetts / E88)).